The sequence spans 4965 residues: Auxin transport protein BIG (4965 aa).

Transmembrane regions (helical) follow at residues 289 to 309 (SDICCTVQVCILASLLEIFSP), 646 to 666 (ACLAAYVVVSGNTSVMVAYEV), and 772 to 792 (LFLICWSTLSGIGYSGGYEGL). Residues 1383-1425 (TNQESNSTVDCDASSGEEDEDDGTSDGELVSIDRDEEEDGNSE) are disordered. Over residues 1397-1407 (SGEEDEDDGTS) the composition is skewed to acidic residues. Residues 1431–1502 (KVCTFTSSGS…RGSSCQCLKP (72 aa)) form a UBR-type zinc finger. The interval 2437-2456 (DDAPDNHAKASAASNSTTGN) is disordered. A compositionally biased stretch (low complexity) spans 2445–2456 (KASAASNSTTGN). The segment at 2469 to 2528 (SVQYCCDGCSTVPILRRRWHCNICPDFDLCETCYEILDADRLPAPHSRDHPMSAIPIELD) adopts a ZZ-type zinc-finger fold. Residues cysteine 2474, cysteine 2477, cysteine 2489, cysteine 2492, cysteine 2498, cysteine 2501, histidine 2514, and histidine 2518 each contribute to the Zn(2+) site. The tract at residues 2997–3037 (NAQKTESGDIGSSTRTGSQSSDSKKKRKGDDSSEGSSEKSC) is disordered. Low complexity predominate over residues 3007–3017 (GSSTRTGSQSS). A compositionally biased stretch (basic and acidic residues) spans 3024–3037 (KGDDSSEGSSEKSC). An MYND-type; degenerate zinc finger spans residues 3319–3359 (CPRCSRSVTDKHGICSNCHENAYQCRQCRNINYENLDSFLC). The disordered stretch occupies residues 3672–3721 (PKSDSGEKEPGMGKSSLMQAKNDDTVGHSVTNLSTSKTQSELSGKIPDGS). A compositionally biased stretch (polar residues) spans 3699 to 3713 (HSVTNLSTSKTQSEL). The interval 4433 to 4963 (PSIPLILSML…DFVRAIIHGA (531 aa)) is UBR4 E3 catalytic module. A HemiRING-type zinc finger spans residues 4562–4681 (GLACMVCREG…WDQLNSLGRA (120 aa)). The Zn(2+) site is built by cysteine 4565, cysteine 4568, histidine 4615, and cysteine 4618. Positions 4684 to 4963 (SRLRLLTYDI…DFVRAIIHGA (280 aa)) constitute a UZI domain. The segment covering 4753 to 4770 (SSSPSTPESPVRLSALSG) has biased composition (low complexity). 2 disordered regions span residues 4753–4778 (SSSPSTPESPVRLSALSGARGGSGSS) and 4822–4846 (STLKLSADTSSSAVRSDEGSSADSN). Residues 4824–4845 (LKLSADTSSSAVRSDEGSSADS) are compositionally biased toward polar residues.

This sequence belongs to the UBR4 family.

Its subcellular location is the membrane. In terms of biological role, required for auxin efflux and polar auxin transport (PAT) influencing auxin-mediated developmental responses (e.g. cell elongation, apical dominance, lateral root production, inflorescence architecture, general growth and development). The protein is Auxin transport protein BIG of Oryza sativa subsp. japonica (Rice).